We begin with the raw amino-acid sequence, 256 residues long: MLWQKSTAPEQAPAPPRPYQGVRVKEPVKELLRRKRGHTSVGAAGPPTAVVLPHQPLATYSTVGPSCLDMEVSASTVTEEGTLCAGWLSQPAPATLQPLAPWTPYTEYVSHEAVSCPYSTDMYVQPVCPSYTVVGPSSVLTYASPPLITNVTPRSTATPAVGPQLEGPEHQAPLTYFPWPQPLSTLPTSSLQYQPPAPTLSGPQFVQLPISIPEPVLQDMDDPRRAISSLTIDKLLLEEEESNTYELNHTLSVEGF.

The tract at residues 1–24 is disordered; sequence MLWQKSTAPEQAPAPPRPYQGVRV. An OCA domain is found at 16–38; sequence PRPYQGVRVKEPVKELLRRKRGH.

This sequence belongs to the POU2AF family. In terms of assembly, interacts with POU2F1/OCT1 and POU2F2/OCT2; the interaction increases POU2F1 and POU2F2 transactivation activity. Post-translationally, ubiquitinated; mediated by SIAH1 or SIAH2 and leading to its subsequent proteasomal degradation. As to expression, B-cell specific.

The protein resides in the nucleus. Functionally, transcriptional coactivator that specifically associates with either POU2F1/OCT1 or POU2F2/OCT2. It boosts the POU2F1/OCT1 mediated promoter activity and to a lesser extent, that of POU2F2/OCT2. It recognizes the POU domains of POU2F1/OCT1 and POU2F2/OCT2. It is essential for the response of B-cells to antigens and required for the formation of germinal centers. Regulates IL6 expression in B cells as POU2F2/OCT2 coactivator. This Mus musculus (Mouse) protein is POU domain class 2-associating factor 1.